We begin with the raw amino-acid sequence, 95 residues long: SMAD5 antisense gene protein 1 (95 aa).

2 disordered regions span residues 1 to 24 (MHKQ…SSWS) and 43 to 70 (SSPT…KPAN). Positions 7–19 (LLPPPATPPPPPQ) are enriched in pro residues.

In terms of tissue distribution, expressed in fetal tissues.

The protein is SMAD5 antisense gene protein 1 (SMAD5-AS1) of Homo sapiens (Human).